Consider the following 307-residue polypeptide: tRNA pseudouridine synthase B (307 aa).

The active-site Nucleophile is D38.

This sequence belongs to the pseudouridine synthase TruB family. Type 1 subfamily.

The catalysed reaction is uridine(55) in tRNA = pseudouridine(55) in tRNA. Responsible for synthesis of pseudouridine from uracil-55 in the psi GC loop of transfer RNAs. The polypeptide is tRNA pseudouridine synthase B (Bacillus cereus (strain ATCC 14579 / DSM 31 / CCUG 7414 / JCM 2152 / NBRC 15305 / NCIMB 9373 / NCTC 2599 / NRRL B-3711)).